Consider the following 873-residue polypeptide: Bifunctional uridylyltransferase/uridylyl-removing enzyme (873 aa).

The segment at 1-332 (MKYLSPLSLS…HQGEQDDAII (332 aa)) is uridylyltransferase. Residues 333 to 692 (IDDDFQRRGR…ISKNASRGGT (360 aa)) are uridylyl-removing. The region spanning 451-573 (VDEHSIRLLK…VRDEERLDYL (123 aa)) is the HD domain. 2 ACT domains span residues 693–777 (EIFV…RPPR) and 800–873 (LMEF…RLSS).

The protein belongs to the GlnD family. Mg(2+) serves as cofactor.

It catalyses the reaction [protein-PII]-L-tyrosine + UTP = [protein-PII]-uridylyl-L-tyrosine + diphosphate. The enzyme catalyses [protein-PII]-uridylyl-L-tyrosine + H2O = [protein-PII]-L-tyrosine + UMP + H(+). Its activity is regulated as follows. Uridylyltransferase (UTase) activity is inhibited by glutamine, while glutamine activates uridylyl-removing (UR) activity. Its function is as follows. Modifies, by uridylylation and deuridylylation, the PII regulatory proteins (GlnB and homologs), in response to the nitrogen status of the cell that GlnD senses through the glutamine level. Under low glutamine levels, catalyzes the conversion of the PII proteins and UTP to PII-UMP and PPi, while under higher glutamine levels, GlnD hydrolyzes PII-UMP to PII and UMP (deuridylylation). Thus, controls uridylylation state and activity of the PII proteins, and plays an important role in the regulation of nitrogen assimilation and metabolism. The chain is Bifunctional uridylyltransferase/uridylyl-removing enzyme from Aliivibrio fischeri (strain MJ11) (Vibrio fischeri).